Consider the following 119-residue polypeptide: MVKMTKSKTFQAYLPNCHRTYSCIHCRAHLANHDELISKSFQGSQGRAYLFNSVVNVGCGPAEERVLLTGLHAVADIYCENCKTTLGWKYEHAFESSQKYKEGKFIIELAHMIKDNGWE.

The region spanning 19–116 (RTYSCIHCRA…IELAHMIKDN (98 aa)) is the Yippee domain. Zn(2+) contacts are provided by C23, C26, C79, and C82. The Nuclear localization signal motif lies at 99–104 (KYKEGK).

It belongs to the yippee family.

The protein resides in the nucleus. Functionally, may play a role in epithelioid conversion of fibroblasts. The protein is Protein yippee-like 1 (YPEL1) of Chlorocebus aethiops (Green monkey).